A 386-amino-acid polypeptide reads, in one-letter code: MSVIKMTDLDLAGKRVFIRADLNVPVKDGKVTSDARIRATIPTLKLALEKGAKVMVTSHLGRPTEGEFKPEDSLQPVVDYLKNAGFNVRLEQDYLNGVDVKDGEIVVLENVRVNKGEKKNDPELGKKYAALCDVFVMDAFGTAHRAQASTYGVAEFAPIACAGPLLAAELDALGKALKEPARPMVAIVGGSKVSTKLEVLNSLSKIADQIIVGGGIANTFIAAAGHNVGKSLYEADLIPVAKELAANTDIPVPVDVRVGLEFSETAAATEKAVNEVKDDESIFDIGDKSAEQLAEIIKNAKTVLWNGPVGVFEFPHFRKGTEIISHAIANSDAFSIAGGGDTLAAINLFGIADKISYISTGGGAFLEFVEGKVLPAVEILEKRAKN.

Substrate-binding positions include 21–23 (DLN), Arg36, 59–62 (HLGR), Arg112, and Arg145. Residues Lys196, Glu313, and 339-342 (GGDT) each bind ATP.

Belongs to the phosphoglycerate kinase family. Monomer.

It localises to the cytoplasm. It carries out the reaction (2R)-3-phosphoglycerate + ATP = (2R)-3-phospho-glyceroyl phosphate + ADP. It functions in the pathway carbohydrate degradation; glycolysis; pyruvate from D-glyceraldehyde 3-phosphate: step 2/5. The polypeptide is Phosphoglycerate kinase (Haemophilus influenzae (strain PittEE)).